The sequence spans 168 residues: uncharacterized protein (168 aa).

The segment at methionine 1–glutamate 52 is disordered. The span at glutamate 10–arginine 23 shows a compositional bias: polar residues. Basic and acidic residues predominate over residues leucine 31–glutamate 40.

This is an uncharacterized protein from Mus musculus (Mouse).